The following is a 187-amino-acid chain: Elongation factor P (187 aa).

An N6-(3,6-diaminohexanoyl)-5-hydroxylysine modification is found at lysine 34.

The protein belongs to the elongation factor P family. May be beta-lysylated on the epsilon-amino group of Lys-34 by the combined action of EpmA and EpmB, and then hydroxylated on the C5 position of the same residue by EpmC (if this protein is present). Lysylation is critical for the stimulatory effect of EF-P on peptide-bond formation. The lysylation moiety may extend toward the peptidyltransferase center and stabilize the terminal 3-CCA end of the tRNA. Hydroxylation of the C5 position on Lys-34 may allow additional potential stabilizing hydrogen-bond interactions with the P-tRNA.

Its subcellular location is the cytoplasm. It functions in the pathway protein biosynthesis; polypeptide chain elongation. In terms of biological role, involved in peptide bond synthesis. Alleviates ribosome stalling that occurs when 3 or more consecutive Pro residues or the sequence PPG is present in a protein, possibly by augmenting the peptidyl transferase activity of the ribosome. Modification of Lys-34 is required for alleviation. The protein is Elongation factor P of Thioalkalivibrio sulfidiphilus (strain HL-EbGR7).